A 207-amino-acid polypeptide reads, in one-letter code: Glycerol-3-phosphate acyltransferase 1 (207 aa).

The next 5 helical transmembrane spans lie at 3 to 23 (YVIASLLGYIFGCIHGSQIVG), 53 to 73 (IVVALIDIFKATAAIFLLLIL), 85 to 105 (HIYIYLTALFVIIGHNYPITM), 127 to 147 (IALIGIGVLILFTIATDYLAV), and 154 to 174 (ISFLITTYYIFGLAPFFIVVG).

It belongs to the PlsY family. As to quaternary structure, probably interacts with PlsX.

The protein resides in the cell membrane. The enzyme catalyses an acyl phosphate + sn-glycerol 3-phosphate = a 1-acyl-sn-glycero-3-phosphate + phosphate. It participates in lipid metabolism; phospholipid metabolism. In terms of biological role, catalyzes the transfer of an acyl group from acyl-phosphate (acyl-PO(4)) to glycerol-3-phosphate (G3P) to form lysophosphatidic acid (LPA). This enzyme utilizes acyl-phosphate as fatty acyl donor, but not acyl-CoA or acyl-ACP. The sequence is that of Glycerol-3-phosphate acyltransferase 1 from Oceanobacillus iheyensis (strain DSM 14371 / CIP 107618 / JCM 11309 / KCTC 3954 / HTE831).